A 353-amino-acid chain; its full sequence is Rhodopsin (353 aa).

At 1-36 (MNGTEGPYFYVPMVNTSGIVRSPYEYPQYYLVNPAA) the chain is on the extracellular side. N-linked (GlcNAc...) asparagine glycosylation is found at Asn-2 and Asn-15. Residues 37–61 (YAALGAYMFLLILVGFPINFLTLYV) traverse the membrane as a helical segment. Residues 62–73 (TIEHKKLRTPLN) lie on the Cytoplasmic side of the membrane. Residues 74 to 96 (YILLNLAVADLFMVFGGFTTTMY) form a helical membrane-spanning segment. The Extracellular segment spans residues 97–110 (TSMHGYFVLGRLGC). The cysteines at positions 110 and 187 are disulfide-linked. Residues 111–133 (NIEGFFATLGGEIALWSLVVLAI) traverse the membrane as a helical segment. Positions 134 to 136 (ERW) match the 'Ionic lock' involved in activated form stabilization motif. Topologically, residues 134–152 (ERWVVVCKPISNFRFGENH) are cytoplasmic. Residues 153–173 (AIMGLAFTWLMAMACAAPPLV) traverse the membrane as a helical segment. Residues 174-202 (GWSRYIPEGMQCSCGIDYYTRAEGFNNES) lie on the Extracellular side of the membrane. Asn-200 carries an N-linked (GlcNAc...) asparagine glycan. A helical membrane pass occupies residues 203-224 (FVIYMFVCHFLIPLMVVFFCYG). Over 225–252 (RLLCAVKEAAAAQQESETTQRAEREVTR) the chain is Cytoplasmic. Residues 253-274 (MVVIMVIAFLICWCPYAGVAWW) traverse the membrane as a helical segment. Over 275 to 286 (IFTHQGSDFGPV) the chain is Extracellular. Residues 287–308 (FMTIPAFFAKSSSIYNPMIYIC) traverse the membrane as a helical segment. An N6-(retinylidene)lysine modification is found at Lys-296. Residues 309–353 (LNKQFRHCMITTLCCGKNPFEEEEGASTASKTEASSVSSSSVSPA) lie on the Cytoplasmic side of the membrane. 2 S-palmitoyl cysteine lipidation sites follow: Cys-322 and Cys-323. A disordered region spans residues 331–353 (EEGASTASKTEASSVSSSSVSPA). A compositionally biased stretch (low complexity) spans 334 to 353 (ASTASKTEASSVSSSSVSPA).

Belongs to the G-protein coupled receptor 1 family. Opsin subfamily. Phosphorylated on some or all of the serine and threonine residues present in the C-terminal region. In terms of processing, contains one covalently linked retinal chromophore.

The protein resides in the membrane. It is found in the cell projection. The protein localises to the cilium. Its subcellular location is the photoreceptor outer segment. Photoreceptor required for image-forming vision at low light intensity. While most salt water fish species use retinal as chromophore, most freshwater fish use 3-dehydroretinal, or a mixture of retinal and 3-dehydroretinal. Light-induced isomerization of 11-cis to all-trans retinal triggers a conformational change that activates signaling via G-proteins. Subsequent receptor phosphorylation mediates displacement of the bound G-protein alpha subunit by arrestin and terminates signaling. This Lithognathus mormyrus (Striped seabream) protein is Rhodopsin (rho).